The sequence spans 304 residues: MTASSKMTSSTTLLSLFMKEDEEGRNKKTTTSTTLESLLMKERRNWVDLPPELTTSILLRLSLTDILDNAQKVCKEWRRICKDPSMWRKINTRDCLMYNFDFVSMCRHIVDLSQGGLLEINVDEHFLSDSLLSYITDRNLRSLGLGMCFPRVTKLGVVNAIAKIPLLETLEVTHSCIKLDLKAIGHACPQLKTLKLNSLGRLWPASDKYDSNVLDDMGPLECDDDALAIAESMPKLHHLQLMANRLTNTGLNAILDGCPHLEHLDVRKCFRISLVGNLEKRCLEMIKELRRPGDSTADYPYNGV.

An F-box domain is found at Arg43–Ile90. 4 LRR repeats span residues Leu132 to Asn159, Thr173 to Ser198, Gly218 to Leu241, and Ala243 to Lys268.

The sequence is that of Putative F-box/LRR-repeat protein 21 (FBL21) from Arabidopsis thaliana (Mouse-ear cress).